The chain runs to 639 residues: MTHHDCAHCSSDACATEMLNLAEANSIETAWHRYEKQQPQCGFGSAGLCCRICLKGPCRIDPFGEGPKYGVCGADRDTIVARHLVRMIAAGTAAHSEHGRHIALAMQHISQGELHDYSIRDEAKLYAIAKTLGVATEGRGLLAIVGDLAAITLGDFQNQDYDKPCAWLAASLTPRRVKRLGDLGLLPHNIDASVAQTMSRTHVGCDADPTNLILGGLRVAMADLDGSMLATELSDALFGTPQPVVSAANLGVMKRGAVNIAVNGHNPMLSDIICDVAADLRDEAIAAGAAEGINIIGICCTGHEVMMRHGVPLATNYLSQELPILTGALEAMVVDVQCIMPSLPRIAECFHTQIITTDKHNKISGATHVPFDEHKAVETAKTIIRMAIAAFGRRDPNRVAIPAFKQKSIVGFSAEAVVAALAKVNADDPLKPLVDNVVNGNIQGIVLFVGCNTTKVQQDSAYVDLAKSLAKRNVLVLATGCAAGAFAKAGLMTSEATTQYAGEGLKGVLSAIGTAAGLGGPLPLVMHMGSCVDNSRAVALATALANKLGVDLSDLPLVASAPECMSEKALAIGSWAVTIGLPTHVGSVPPVIGSQIVTKLVTETAKDLVGGYFIVDTDPKSAGDKLYAAIQERRAGLGL.

Residues Cys-41, Cys-49, Cys-50, Cys-53, Cys-58, and Cys-72 each coordinate [4Fe-4S] cluster. 6 residues coordinate [Ni-4Fe-4S] cluster: His-265, Cys-300, Cys-338, Cys-451, Cys-481, and Cys-531.

The protein belongs to the Ni-containing carbon monoxide dehydrogenase family. Homodimer. [4Fe-4S] cluster is required as a cofactor. It depends on [Ni-4Fe-4S] cluster as a cofactor.

The protein resides in the cytoplasm. Its subcellular location is the cell inner membrane. The enzyme catalyses CO + 2 oxidized [2Fe-2S]-[ferredoxin] + H2O = 2 reduced [2Fe-2S]-[ferredoxin] + CO2 + 2 H(+). In terms of biological role, allows growth in a CO-dependent manner in the dark. CODH oxidizes carbon monoxide coupled, via CooF, to the reduction of a hydrogen cation by a hydrogenase (possibly CooH). The sequence is that of Carbon monoxide dehydrogenase (cooS) from Rhodospirillum rubrum.